Reading from the N-terminus, the 312-residue chain is MGLCKCPKRKVTNLFCFEHRVNVCEHCLVANHAKCIVQSYLQWLQDSDYNPNCRLCNIPLAARETTRLICYDLFHWACLNERAAQLPRNTAPAGYQCPSCSGPIFPPTNLAGPVASALREKLATVNWARAGLGLPLIDELVSPEPEPLNTSEFSDWSSFNASGSPEQEETASASAAPAFYSQVPRPPASPSRPEQHTVIHMGNPEPLTHASAPRKVYDTRDDERAPGLHRDCDDDKYRRRPALGWLAQLLRSRAGSRKRPLTLLQRAGLLLLLGLLGFLALLALMSRLGRAAADSDPNLDPLMNPHIRVGPS.

The B box-type; degenerate zinc-finger motif lies at 1–43; the sequence is MGLCKCPKRKVTNLFCFEHRVNVCEHCLVANHAKCIVQSYLQW. The Cytoplasmic segment spans residues 1–268; sequence MGLCKCPKRK…RPLTLLQRAG (268 aa). The RING-type; degenerate zinc-finger motif lies at 53–101; the sequence is CRLCNIPLAARETTRLICYDLFHWACLNERAAQLPRNTAPAGYQCPSCS. Residues 144–233 are disordered; that stretch reads EPEPLNTSEF…RAPGLHRDCD (90 aa). A compositionally biased stretch (polar residues) spans 148-173; the sequence is LNTSEFSDWSSFNASGSPEQEETASA. The span at 215–233 shows a compositional bias: basic and acidic residues; the sequence is KVYDTRDDERAPGLHRDCD. A helical membrane pass occupies residues 269–289; sequence LLLLLGLLGFLALLALMSRLG. The Lumenal segment spans residues 290–312; that stretch reads RAAADSDPNLDPLMNPHIRVGPS.

This sequence belongs to the ZFPL1 family. In terms of assembly, interacts with GOLGA2/GM130. Post-translationally, phosphorylated.

The protein resides in the golgi apparatus. The protein localises to the cis-Golgi network membrane. Its function is as follows. Required for cis-Golgi integrity and efficient ER to Golgi transport. Involved in the maintenance of the integrity of the cis-Golgi, possibly via its interaction with GOLGA2/GM130. The chain is Zinc finger protein-like 1 (ZFPL1) from Bos taurus (Bovine).